The primary structure comprises 302 residues: Spermidine synthase (302 aa).

Residue M1 is modified to N-acetylmethionine. The region spanning 18-253 (EGWFRETCSL…GQIGFMLCSK (236 aa)) is the PABS domain. Position 49 (Q49) interacts with S-adenosyl 3-(methylsulfanyl)propylamine. Y79 provides a ligand contact to putrescine. S-adenosyl 3-(methylsulfanyl)propylamine is bound by residues Q80, D104, E124, 155–156 (DG), and D173. The active-site Proton acceptor is D173. Putrescine is bound by residues 173–176 (DSSD) and Y241.

It belongs to the spermidine/spermine synthase family. In terms of assembly, homodimer or homotetramer.

It catalyses the reaction S-adenosyl 3-(methylsulfanyl)propylamine + putrescine = S-methyl-5'-thioadenosine + spermidine + H(+). Its pathway is amine and polyamine biosynthesis; spermidine biosynthesis; spermidine from putrescine: step 1/1. The activity is thought to be regulated mainly by the availability of decarboxylated S-adenosylmethionine. Catalyzes the production of spermidine from putrescine and decarboxylated S-adenosylmethionine (dcSAM). Has a strong preference for putrescine as substrate, and has very low activity towards 1,3-diaminopropane. Has extremely low activity towards spermidine. The chain is Spermidine synthase (Srm) from Mus musculus (Mouse).